Consider the following 376-residue polypeptide: Oligopeptide transport system permease protein OppC (376 aa).

The next 7 helical transmembrane spans lie at 46–66, 149–169, 173–193, 209–229, 242–262, 297–317, and 341–361; these read WAIL…IVPL, YPLL…WASM, LWIA…YGAI, IIEI…GATF, VIFT…RIYI, LAVV…SLVF, and IALI…TRVF. In terms of domain architecture, ABC transmembrane type-1 spans 169-362; the sequence is MAKSLWIAIV…ILTVSTRVFA (194 aa).

Belongs to the binding-protein-dependent transport system permease family. OppBC subfamily. In terms of assembly, the complex is composed of two ATP-binding proteins (OppD and OppF), two transmembrane proteins (OppB and OppC) and a solute-binding protein (OppA).

It is found in the cell membrane. Its function is as follows. Part of the ABC transporter complex OppABCDF involved in the uptake of oligopeptides. Probably responsible for the translocation of the substrate across the membrane. This Mycoplasma pneumoniae (strain ATCC 29342 / M129 / Subtype 1) (Mycoplasmoides pneumoniae) protein is Oligopeptide transport system permease protein OppC (oppC).